A 354-amino-acid polypeptide reads, in one-letter code: Malate dehydrogenase 1, peroxisomal (354 aa).

Residues 6–14 are peroxisomal targeting signal PTS2; it reads RIARISAHL. Residues 49–55 and Asp75 contribute to the NAD(+) site; that span reads GAAGGIG. Substrate contacts are provided by Arg122 and Arg128. Residues Asn135 and 158-160 each bind NAD(+); that span reads ISN. 2 residues coordinate substrate: Asn160 and Arg194. Catalysis depends on His218, which acts as the Proton acceptor. NAD(+) is bound at residue Met269.

Belongs to the LDH/MDH superfamily. MDH type 1 family. In terms of assembly, homodimer. As to expression, expressed in rosette leaves at low levels.

Its subcellular location is the peroxisome. It catalyses the reaction (S)-malate + NAD(+) = oxaloacetate + NADH + H(+). In terms of biological role, catalyzes a reversible NAD-dependent dehydrogenase reaction involved in central metabolism and redox homeostasis between organelle compartments. Peroxisomal NAD-dependent malate dehydrogenase involved in fatty acid beta-oxidation. Reoxidizes NADH from the beta-oxidation and provides NAD for the conversion of fatty acyl-CoA to acetyl-CoA. Does not participate directly in the glyoxylate cycle. Required for maintenance of photosynthetic rates under photorespiratory conditions, and carbon flow during photorespiration. Supplies NADH reductant to the peroxisomal hydroxypyruvate reductase (HPR), which reduces hydroxypyruvate into glycerate in the photorespiratory cycle. The chain is Malate dehydrogenase 1, peroxisomal from Arabidopsis thaliana (Mouse-ear cress).